We begin with the raw amino-acid sequence, 82 residues long: uncharacterized protein (82 aa).

A Resolvase/invertase-type recombinase catalytic domain is found at 11–82 (NVGIYVRVST…HIEQGIMTHC (72 aa)). Serine 19 acts as the O-(5'-phospho-DNA)-serine intermediate in catalysis.

Belongs to the site-specific recombinase resolvase family.

This is an uncharacterized protein from Bacillus phage phi105 (Bacteriophage phi-105).